Here is a 276-residue protein sequence, read N- to C-terminus: uncharacterized protein (276 aa).

15–22 (GKGGVGKS) contacts ATP. 4Fe-4S ferredoxin-type domains are found at residues 68–96 (EIYEINDDCIRCGKCLDVCQFDAIGDFKI) and 92–121 (GDFKINPILCEGCGACELICEFDAIEPIKR). Cysteine 76, cysteine 79, cysteine 82, cysteine 86, cysteine 101, cysteine 104, cysteine 107, and cysteine 111 together coordinate [4Fe-4S] cluster.

This is an uncharacterized protein from Methanocaldococcus jannaschii (strain ATCC 43067 / DSM 2661 / JAL-1 / JCM 10045 / NBRC 100440) (Methanococcus jannaschii).